The following is a 293-amino-acid chain: Bisanhydrobacterioruberin hydratase (293 aa).

A run of 7 helical transmembrane segments spans residues 36–56 (IAVVFPLVGAVTLLASAEGLL), 66–86 (FVLFGTFVMRLPLVAGIFPLV), 89–109 (RAGLALVALTLYSYGIELVGV), 134–154 (FGLPVFFFPLVLNAYLLVLLL), 171–191 (ATVMLVDLVLDPGAVAIGFWI), 199–219 (GVPWQNYAGWLLSGSVAVLLF), and 254–274 (LFYTNWVPFGLAALLGAGLLW).

It belongs to the BABR hydratase family.

Its subcellular location is the membrane. The catalysed reaction is bacterioruberin = bisanhydrobacterioruberin + 2 H2O. It participates in carotenoid biosynthesis. In terms of biological role, involved in the biosynthesis of the acyclic C50 carotenoid bacterioruberin (BR). Catalyzes the reaction that introduces hydroxyl groups to C3'' and C3''' of bisanhydrobacterioruberin (BABR) to generate BR. This chain is Bisanhydrobacterioruberin hydratase, found in Haloarcula japonica (strain ATCC 49778 / DSM 6131 / JCM 7785 / NBRC 101032 / NCIMB 13157 / TR-1).